The following is a 1053-amino-acid chain: 3-hydroxy-3-methylglutaryl-coenzyme A reductase (1053 aa).

The Cytoplasmic segment spans residues 1-8 (MIYKLAAR). Residues 9-29 (YPIQVIAIVGILVSMAYFSFL) traverse the membrane as a helical segment. Over 30–203 (EALTQEDFPV…LKIASQASKT (174 aa)) the chain is Lumenal. An N-linked (GlcNAc...) asparagine glycan is attached at Asn-137. The chain crosses the membrane as a helical span at residues 204 to 224 (ELLIVGTAYACMLISIVSLYL). The SSD domain maps to 204 to 365 (ELLIVGTAYA…FSFFVAILTL (162 aa)). The Cytoplasmic portion of the chain corresponds to 225–232 (KMRRLGSK). Residues 233–253 (FWLFFSVLLSTLFSVQFAMTL) traverse the membrane as a helical segment. Over 254-258 (VRASG) the chain is Lumenal. A helical membrane pass occupies residues 259–279 (VRISLVSLIESLPFLINVVAL). The Cytoplasmic portion of the chain corresponds to 280 to 320 (DKAAELTRQVITRCSVSDSHSPMHEDIAKACRNAAPPILRH). The next 2 helical transmembrane spans lie at 321–341 (FSFGIVVLAIFSYCNFGIKQF) and 342–362 (FLFAAVMIYDLLLLFSFFVAI). The Cytoplasmic portion of the chain corresponds to 363–417 (LTLKLEMRRYNAKDDVRKVLIEEGLSESTARHVADGNDSSATTSAGSRYFKVRYG). The helical transmembrane segment at 418–438 (TKIILFIFIAFNLFELCSIPF) threads the bilayer. The Lumenal portion of the chain corresponds to 439 to 526 (KHYAATSAAA…NNWSHYISAS (88 aa)). N-linked (GlcNAc...) asparagine glycosylation occurs at Asn-518. A helical transmembrane segment spans residues 527–547 (FLSKWIVCALSLSIAVNVFLL). At 548–1053 (NAARLNSIKE…KSVNSRVPGR (506 aa)) the chain is on the cytoplasmic side. Catalysis depends on Glu-712, which acts as the Charge relay system. 718 to 724 (STMRGCK) is a binding site for CoA. NADP(+) contacts are provided by residues 779-781 (SRF) and 806-814 (DAMGMNMIS). Lys-846 acts as the Charge relay system in catalysis. 875–877 (VLK) serves as a coordination point for CoA. Asp-922 acts as the Charge relay system in catalysis. 1017–1018 (SH) provides a ligand contact to CoA. Catalysis depends on His-1018, which acts as the Proton donor. 1022 to 1023 (NR) is a binding site for NADP(+). Residue Ser-1024 is modified to Phosphoserine. Thr-1028 carries the post-translational modification Phosphothreonine. A disordered region spans residues 1028 to 1053 (TPAMDSSAKKPATDALKSVNSRVPGR).

It belongs to the HMG-CoA reductase family.

The protein localises to the endoplasmic reticulum membrane. The protein resides in the nucleus envelope. The catalysed reaction is (R)-mevalonate + 2 NADP(+) + CoA = (3S)-3-hydroxy-3-methylglutaryl-CoA + 2 NADPH + 2 H(+). The protein operates within metabolic intermediate biosynthesis; (R)-mevalonate biosynthesis; (R)-mevalonate from acetyl-CoA: step 3/3. Its function is as follows. Part of the first module of ergosterol biosynthesis pathway that includes the early steps of the pathway, conserved across all eukaryotes, and which results in the formation of mevalonate from acetyl-coenzyme A (acetyl-CoA). Hmg1 catalyzes the reduction of hydroxymethylglutaryl-CoA (HMG-CoA) to mevalonate. The first module starts with the action of the cytosolic acetyl-CoA acetyltransferase eg10 that catalyzes the formation of acetoacetyl-CoA. The hydroxymethylglutaryl-CoA synthases erg13 then condenses acetyl-CoA with acetoacetyl-CoA to form HMG-CoA. The rate-limiting step of the early module is the reduction to mevalonate by the 3-hydroxy-3-methylglutaryl-coenzyme A (HMG-CoA) reductases hcs1. The protein is 3-hydroxy-3-methylglutaryl-coenzyme A reductase of Schizosaccharomyces pombe (strain 972 / ATCC 24843) (Fission yeast).